We begin with the raw amino-acid sequence, 478 residues long: Cytochrome c-552 (478 aa).

The signal sequence occupies residues 1-26; that stretch reads MARKTLRARRFFSLIFPFFFITSVYA. Residue His-94 coordinates heme c. Heme-binding residues include Cys-122, Cys-125, and Lys-126. Heme c is bound by residues Cys-160, Cys-163, His-164, Cys-209, Cys-212, and His-213. Residues Glu-215, Tyr-216, Lys-261, and Gln-263 each contribute to the Ca(2+) site. Tyr-216 serves as a coordination point for substrate. His-264 provides a ligand contact to substrate. Residues His-275, Cys-282, Cys-285, His-286, His-301, Cys-314, Cys-317, His-318, and His-393 each coordinate heme c.

Belongs to the cytochrome c-552 family. It depends on Ca(2+) as a cofactor. Heme c is required as a cofactor.

It is found in the periplasm. The catalysed reaction is 6 Fe(III)-[cytochrome c] + NH4(+) + 2 H2O = 6 Fe(II)-[cytochrome c] + nitrite + 8 H(+). It participates in nitrogen metabolism; nitrate reduction (assimilation). In terms of biological role, catalyzes the reduction of nitrite to ammonia, consuming six electrons in the process. In Salmonella paratyphi A (strain ATCC 9150 / SARB42), this protein is Cytochrome c-552.